Reading from the N-terminus, the 64-residue chain is GDEKRPWECCDIAMCTRSIPPICRCVDKVDRCSDACKDCEETEDNRHVCFDTYIGDPGPTCHDD.

Cystine bridges form between Cys9–Cys61, Cys10–Cys25, Cys15–Cys23, Cys32–Cys39, and Cys36–Cys49.

The protein belongs to the Bowman-Birk serine protease inhibitor family.

The polypeptide is Bowman-Birk type trypsin inhibitor TI1 (Coix lacryma-jobi (Job's tears)).